The sequence spans 373 residues: 5-amino-6-(5-phospho-D-ribitylamino)uracil phosphatase, chloroplastic (373 aa).

Belongs to the HAD-like hydrolase superfamily. DOG/GPP family. Homodimer. Mg(2+) is required as a cofactor.

It localises to the plastid. Its subcellular location is the chloroplast. It carries out the reaction 5-amino-6-(5-phospho-D-ribitylamino)uracil + H2O = 5-amino-6-(D-ribitylamino)uracil + phosphate. Functionally, catalyzes the dephosphorylation of 5-amino-6-(5-phospho-D-ribitylamino)uracil, also known as ARPP, but has no activity toward flavin mononucleotide (FMN). The protein is 5-amino-6-(5-phospho-D-ribitylamino)uracil phosphatase, chloroplastic of Arabidopsis thaliana (Mouse-ear cress).